The chain runs to 440 residues: Thymidine phosphorylase (440 aa).

This sequence belongs to the thymidine/pyrimidine-nucleoside phosphorylase family. In terms of assembly, homodimer.

The catalysed reaction is thymidine + phosphate = 2-deoxy-alpha-D-ribose 1-phosphate + thymine. The protein operates within pyrimidine metabolism; dTMP biosynthesis via salvage pathway; dTMP from thymine: step 1/2. The enzymes which catalyze the reversible phosphorolysis of pyrimidine nucleosides are involved in the degradation of these compounds and in their utilization as carbon and energy sources, or in the rescue of pyrimidine bases for nucleotide synthesis. This Escherichia coli O139:H28 (strain E24377A / ETEC) protein is Thymidine phosphorylase.